The primary structure comprises 525 residues: FNIP repeat-containing protein DDB_G0274617 (525 aa).

Residues 65-107 (YQHEIKKEMLPSSIISIIFYNIKNILSSDSIPDTVKFLGFNGY) form an FNIP repeat.

This Dictyostelium discoideum (Social amoeba) protein is FNIP repeat-containing protein DDB_G0274617.